Reading from the N-terminus, the 495-residue chain is Keratin, type II cuticular 87 (495 aa).

The segment at 1-111 (MSCFSSRLGA…PNAQCVKHEE (111 aa)) is head. Residues 111–422 (EKEQIKCLNS…RLLEGEEQRL (312 aa)) enclose the IF rod domain. A coil 1A region spans residues 112–146 (KEQIKCLNSKFAAFIDKVRFLEQQNKLLETKWQFY). The segment at 147-156 (QNRKCCESNM) is linker 1. The coil 1B stretch occupies residues 157-257 (EPLFEGYIEA…YEEETRLLHS (101 aa)). The tract at residues 258–274 (HISDTSVVVKMDNSRDL) is linker 12. The tract at residues 275–418 (NMDCVVAEIK…ITYRRLLEGE (144 aa)) is coil 2. A tail region spans residues 419–494 (EQRLCEGVGS…TCGSSRSVRF (76 aa)).

Belongs to the intermediate filament family. In terms of assembly, heterotetramer of two type I and two type II keratins.

In Mus musculus (Mouse), this protein is Keratin, type II cuticular 87.